Here is an 83-residue protein sequence, read N- to C-terminus: Hainantoxin-III 12 (83 aa).

Residues 1-21 form the signal peptide; it reads MKASMFLALAGLVLLFVVGYA. Residues 22 to 48 constitute a propeptide that is removed on maturation; it reads SGSEEKEFPRELLSKIFAVDDFKGEER. Intrachain disulfides connect cysteine 50-cysteine 65, cysteine 57-cysteine 70, and cysteine 64-cysteine 77. Leucine 81 is subject to Leucine amide.

It belongs to the neurotoxin 10 (Hwtx-1) family. 15 (Hntx-3) subfamily. Monomer. As to expression, expressed by the venom gland.

Its subcellular location is the secreted. Selective antagonist of neuronal tetrodotoxin (TTX)-sensitive voltage-gated sodium channels (IC(50)=1270 nM on Nav1.1/SCN1A, 270 nM on Nav1.2/SCN2A, 491 nM on Nav1.3/SCN3A and 232 nM on Nav1.7/SCN9A). This toxin suppress Nav1.7 current amplitude without significantly altering the activation, inactivation, and repriming kinetics. Short extreme depolarizations partially activate the toxin-bound channel, indicating voltage-dependent inhibition of this toxin. This toxin increases the deactivation of the Nav1.7 current after extreme depolarizations. The toxin-Nav1.7 complex is gradually dissociated upon prolonged strong depolarizations in a voltage-dependent manner, and the unbound toxin rebinds to Nav1.7 after a long repolarization. Moreover, analysis of chimeric channels showed that the DIIS3-S4 linker is critical for toxin binding to Nav1.7. These data are consistent with this toxin interacting with Nav1.7 site 4 and trapping the domain II voltage sensor in the closed state. This Cyriopagopus hainanus (Chinese bird spider) protein is Hainantoxin-III 12.